Reading from the N-terminus, the 462-residue chain is tRNA modification GTPase MnmE (462 aa).

The (6S)-5-formyl-5,6,7,8-tetrahydrofolate site is built by arginine 27, glutamate 89, and arginine 128. The TrmE-type G domain occupies 224-383 (GLATAIVGRP…LDERIAKLFF (160 aa)). Asparagine 234 is a K(+) binding site. GTP-binding positions include 234 to 239 (NVGKSS), 253 to 259 (TDVAGTT), and 278 to 281 (DTAG). Mg(2+) is bound at residue serine 238. Threonine 253, valine 255, and threonine 258 together coordinate K(+). Threonine 259 lines the Mg(2+) pocket. Lysine 462 contributes to the (6S)-5-formyl-5,6,7,8-tetrahydrofolate binding site.

The protein belongs to the TRAFAC class TrmE-Era-EngA-EngB-Septin-like GTPase superfamily. TrmE GTPase family. Homodimer. Heterotetramer of two MnmE and two MnmG subunits. K(+) serves as cofactor.

The protein localises to the cytoplasm. In terms of biological role, exhibits a very high intrinsic GTPase hydrolysis rate. Involved in the addition of a carboxymethylaminomethyl (cmnm) group at the wobble position (U34) of certain tRNAs, forming tRNA-cmnm(5)s(2)U34. This chain is tRNA modification GTPase MnmE, found in Lacticaseibacillus paracasei (strain ATCC 334 / BCRC 17002 / CCUG 31169 / CIP 107868 / KCTC 3260 / NRRL B-441) (Lactobacillus paracasei).